The primary structure comprises 512 residues: MNARALLCSSNIHSLYTSNRPPEKTSSSRSLRNLKPSPKSLRVWIYPRNRSSVFRVLVRSSDKSESSNSYYVEGDKVSGNNDVVSDSPSSIVLPWWEEFPKRWVIVLLCFSAFLLCNMDRVNMSIAILPMSAEYGWNPATVGLIQSSFFWGYLLTQIAGGIWADTVGGKRVLGFGVIWWSIATILTPVAAKLGLPYLLVVRAFMGVGEGVAMPAMNNILSKWVPVQERSRSLALVYSGMYLGSVTGLAFSPFLIHQFGWPSVFYSFGSLGTVWLTLWLTKAESSPLEDPTLLPEERKLIADNCASKEPVKSIPWRLILSKPPVWALISCHFCHNWGTFILLTWMPTYYHQVLKFNLMESGLLSVFPWMTMAISANAGGWIADTLVSRGFSVTNVRKIMQTIGFLGPAFFLTQLKHIDSPTMAVLCMACSQGTDAFSQSGLYSNHQDIAPRYSGVLLGLSNTAGVLAGVLGTAATGHILQHGSWDDVFTISVGLYLVGTVIWNLFSTGEKIID.

Residues 1-59 (MNARALLCSSNIHSLYTSNRPPEKTSSSRSLRNLKPSPKSLRVWIYPRNRSSVFRVLVR) constitute a chloroplast transit peptide. The next 11 membrane-spanning stretches (helical) occupy residues 103–123 (WVIVLLCFSAFLLCNMDRVNM), 141–161 (VGLIQSSFFWGYLLTQIAGGI), 171–191 (VLGFGVIWWSIATILTPVAAK), 192–212 (LGLPYLLVVRAFMGVGEGVAM), 234–254 (LVYSGMYLGSVTGLAFSPFLI), 257–277 (FGWPSVFYSFGSLGTVWLTLW), 323–343 (VWALISCHFCHNWGTFILLTW), 361–381 (LLSVFPWMTMAISANAGGWIA), 401–421 (IGFLGPAFFLTQLKHIDSPTM), 453–473 (GVLLGLSNTAGVLAGVLGTAA), and 486–506 (VFTISVGLYLVGTVIWNLFST).

The protein belongs to the major facilitator superfamily. Sodium/anion cotransporter (TC 2.A.1.14) family. As to expression, expressed in flower buds, sepals of mature flowers and mature leaves, less in senescent leaves and at low levels in roots.

It is found in the plastid. Its subcellular location is the chloroplast thylakoid membrane. Specific for inorganic phosphate transport across the thylakoid membrane in a sodium dependent manner. Binds glutamate but cannot transport it. May act as an ascorbate transporter at the thylakoid membrane. The chain is Sodium-dependent phosphate transport protein 1, chloroplastic (ANTR1) from Arabidopsis thaliana (Mouse-ear cress).